The sequence spans 249 residues: MKLNISFPATGCQKLIEVDDERKLRTFYEKRMATEVAADALGEEWKGYVVRISGGNDKQGFPMKQGVLTHGRVRLLLSKGHSCYRPRRTGERKRKSVRGCIVDANLSVLNLVIVKKGEKDIPGLTDTTVPRRLGPKRASRIRKLFNLSKEDDVRQYVVRKPLNKEGKKPRTKAPKIQRLVTPRVLQHKRRRIALKKQRTKKNKEEAAEYAKLLAKRMKEAKEKRQEQIAKRRRLSSLRASTSKSESSQK.

Residue lysine 14 forms a Glycyl lysine isopeptide (Lys-Gly) (interchain with G-Cter in SUMO2) linkage. Position 35 is an ADP-ribosyl glutamic acid (glutamate 35). Arginine 137 is subject to (3R)-3-hydroxyarginine. Serine 148 carries the phosphoserine modification. Position 211 is an N6-acetyllysine (lysine 211). The segment covering methionine 217–alanine 229 has biased composition (basic and acidic residues). The segment at methionine 217–lysine 249 is disordered. Residues serine 235, serine 236, serine 240, serine 242, serine 244, and serine 247 each carry the phosphoserine modification. The segment covering serine 236–lysine 249 has biased composition (low complexity).

The protein belongs to the eukaryotic ribosomal protein eS6 family. In terms of assembly, component of the small ribosomal subunit. Part of the small subunit (SSU) processome, composed of more than 70 proteins and the RNA chaperone small nucleolar RNA (snoRNA) U3. Ribosomal protein S6 is the major substrate of protein kinases in eukaryote ribosomes. The phosphorylation is stimulated by growth factors, tumor promoting agents, and mitogens. It is dephosphorylated at growth arrest. Phosphorylated at Ser-235 and Ser-236 by RPS6KA1 and RPS6KA3; phosphorylation at these sites facilitates the assembly of the pre-initiation complex. In terms of processing, specifically hydroxylated (with R stereochemistry) at C-3 of Arg-137 by KDM8. Post-translationally, mono-ADP-ribosylation at Glu-35 by PARP16 inhibits polysome assembly and mRNA loading, thereby inhibiting protein translation.

The protein resides in the cytoplasm. The protein localises to the nucleus. It is found in the nucleolus. In terms of biological role, component of the 40S small ribosomal subunit. Plays an important role in controlling cell growth and proliferation through the selective translation of particular classes of mRNA. Part of the small subunit (SSU) processome, first precursor of the small eukaryotic ribosomal subunit. During the assembly of the SSU processome in the nucleolus, many ribosome biogenesis factors, an RNA chaperone and ribosomal proteins associate with the nascent pre-rRNA and work in concert to generate RNA folding, modifications, rearrangements and cleavage as well as targeted degradation of pre-ribosomal RNA by the RNA exosome. This is Small ribosomal subunit protein eS6 (RPS6) from Oryctolagus cuniculus (Rabbit).